Reading from the N-terminus, the 158-residue chain is MDNKLTHFDNKGNAVMVDVSNKNETERIAIATGTVKASSETIELIKSGQIGKGDVLGVARVAGIMAMKNTSNLIPMCHPVMITGSSIDFEIDSEKNEIRITATSKVVHKTGVEMEALTGVSIAALTIYDMCKAVDKRMVIGDIHLVKKLGGKSGEFNF.

Substrate is bound by residues 76–78 and 114–115; these read MCH and ME. Residue aspartate 129 is part of the active site.

The protein belongs to the MoaC family. In terms of assembly, homohexamer; trimer of dimers.

The enzyme catalyses (8S)-3',8-cyclo-7,8-dihydroguanosine 5'-triphosphate = cyclic pyranopterin phosphate + diphosphate. It participates in cofactor biosynthesis; molybdopterin biosynthesis. Its function is as follows. Catalyzes the conversion of (8S)-3',8-cyclo-7,8-dihydroguanosine 5'-triphosphate to cyclic pyranopterin monophosphate (cPMP). The protein is Cyclic pyranopterin monophosphate synthase of Clostridium perfringens (strain 13 / Type A).